The primary structure comprises 90 residues: Acyl-CoA-binding protein (90 aa).

A compositionally biased stretch (basic and acidic residues) spans 1 to 16; it reads MGLKEDFEEHAEKAKT. A disordered region spans residues 1-20; sequence MGLKEDFEEHAEKAKTLPEN. In terms of domain architecture, ACB spans 3–88; sequence LKEDFEEHAE…VKQLLGEAAA (86 aa). An acyl-CoA-binding positions include 30 to 34, K56, and Y75; that span reads YGLYK.

The protein belongs to the ACBP family.

Binds medium- and long-chain acyl-CoA esters with very high affinity and may function as an intracellular carrier of acyl-CoA esters. The polypeptide is Acyl-CoA-binding protein (Ricinus communis (Castor bean)).